Reading from the N-terminus, the 292-residue chain is Claudin-23 (292 aa).

At 1–3 (MRT) the chain is on the cytoplasmic side. A helical transmembrane segment spans residues 4–24 (PVVMTLGMVLAPCGLLLNLTG). Residues 25–81 (TLAPGWRLVKGFLNQPVDVELYQGLWDMCREQSSRERECGQTDQWGYFEAQPVLVAR) lie on the Extracellular side of the membrane. The helical transmembrane segment at 82 to 102 (ALMVTSLAATVLGLLLASLGV) threads the bilayer. The Cytoplasmic portion of the chain corresponds to 103-110 (RCWQDEPN). The helical transmembrane segment at 111-131 (FVLAGLSGVVLFVAGLLGLIP) threads the bilayer. Residues 132–160 (VSWYNHFLGDRDVLPAPASPVTVQVSYSL) are Extracellular-facing. A helical membrane pass occupies residues 161–181 (VLGYLGSCLLLLGGFSLALSF). At 182 to 292 (APWCDERCRR…DSSLPCDSDL (111 aa)) the chain is on the cytoplasmic side. Positions 222–292 (KYYSDGQHRP…DSSLPCDSDL (71 aa)) are disordered. The span at 273–282 (DAPSCSTHPC) shows a compositional bias: polar residues.

Belongs to the claudin family. Expressed in germinal center B-cells, placenta, stomach as well as in colon tumor.

It localises to the cell junction. It is found in the tight junction. Its subcellular location is the cell membrane. Plays a major role in tight junction-specific obliteration of the intercellular space, through calcium-independent cell-adhesion activity. This is Claudin-23 (CLDN23) from Homo sapiens (Human).